The primary structure comprises 162 residues: Transcription elongation factor GreB (162 aa).

Residues 52 to 73 (KKLLREIDRRVRYLRKRLEDVK) adopt a coiled-coil conformation.

This sequence belongs to the GreA/GreB family. GreB subfamily.

In terms of biological role, necessary for efficient RNA polymerase transcription elongation past template-encoded arresting sites. The arresting sites in DNA have the property of trapping a certain fraction of elongating RNA polymerases that pass through, resulting in locked ternary complexes. Cleavage of the nascent transcript by cleavage factors such as GreA or GreB allows the resumption of elongation from the new 3'terminus. GreB releases sequences of up to 9 nucleotides in length. The protein is Transcription elongation factor GreB of Pseudomonas putida (strain ATCC 47054 / DSM 6125 / CFBP 8728 / NCIMB 11950 / KT2440).